Here is a 480-residue protein sequence, read N- to C-terminus: Uridine/deoxyuridine transporter (480 aa).

The next 14 helical transmembrane spans lie at 14–34 (VGSI…FQLN), 55–75 (SIAL…LFLP), 93–113 (LTMI…LMIG), 115–135 (ILQG…HVKV), 147–167 (ILTS…GWLV), 174–194 (SVFF…SFGT), 207–227 (WTGV…VNAL), 239–259 (WLLA…FWQV), 280–300 (GLLI…NGII), 320–340 (LVTL…SGFL), 358–378 (IIGI…LLLL), 382–402 (FIGI…GIVL), 417–437 (GMFN…PTVL), and 449–469 (ISGI…SFLI).

This sequence belongs to the major facilitator superfamily. EmrB family.

The protein localises to the cell membrane. Functionally, responsible for the uptake of uridine and deoxyuridine. Not involved in purine nucleoside uptake. This chain is Uridine/deoxyuridine transporter, found in Lactococcus lactis subsp. cremoris (strain MG1363).